Here is a 1199-residue protein sequence, read N- to C-terminus: Metabotropic glutamate receptor 1 (1199 aa).

A signal peptide spans 1–20; that stretch reads MVRLLLIFFPMIFLEMSILP. The Extracellular portion of the chain corresponds to 21 to 592; that stretch reads RMPDRKVLLA…IRYLEWSDIE (572 aa). Cys-67 and Cys-109 are oxidised to a cystine. Tyr-74 provides a ligand contact to L-glutamate. N-linked (GlcNAc...) asparagine glycosylation is present at Asn-98. Residues Ser-165 and 186–188 contribute to the L-glutamate site; that span reads SAT. N-linked (GlcNAc...) asparagine glycosylation occurs at Asn-223. Tyr-236 is an L-glutamate binding site. The cysteines at positions 289 and 291 are disulfide-linked. Asp-318 lines the L-glutamate pocket. The cysteines at positions 378 and 394 are disulfide-linked. N-linked (GlcNAc...) asparagine glycosylation occurs at Asn-397. Residue Lys-409 participates in L-glutamate binding. An intrachain disulfide couples Cys-432 to Cys-439. Asn-515 carries N-linked (GlcNAc...) asparagine glycosylation. A helical membrane pass occupies residues 593–615; sequence SIIAIAFSCLGILVTLFVTLIFV. The Cytoplasmic segment spans residues 616–629; that stretch reads LYRDTPVVKSSSRE. The helical transmembrane segment at 630–650 threads the bilayer; that stretch reads LCYIILAGIFLGYVCPFTLIA. Over 651–658 the chain is Extracellular; it reads KPTTTSCY. A disulfide bridge links Cys-657 with Cys-746. A helical membrane pass occupies residues 659–680; that stretch reads LQRLLVGLSSAMCYSALVTKTN. The Cytoplasmic segment spans residues 681–703; that stretch reads RIARILAGSKKKICTRKPRFMSA. The chain crosses the membrane as a helical span at residues 704-727; sequence WAQVIIASILISVQLTLVVTLIIM. Over 728–750 the chain is Extracellular; that stretch reads EPPMPILSYPSIKEVYLICNTSN. N-linked (GlcNAc...) asparagine glycosylation is present at Asn-747. Residues 751–772 form a helical membrane-spanning segment; sequence LGVVAPVGYNGLLIMSCTYYAF. Over 773 to 785 the chain is Cytoplasmic; that stretch reads KTRNVPANFNEAK. A helical transmembrane segment spans residues 786-807; that stretch reads YIAFTMYTTCIIWLAFVPIYFG. Residues 808-815 lie on the Extracellular side of the membrane; it reads SNYKIITT. The chain crosses the membrane as a helical span at residues 816–840; that stretch reads CFAVSLSVTVALGCMFTPKMYIIIA. Over 841–1199 the chain is Cytoplasmic; sequence KPERNVRSAF…RDYKQSSSTL (359 aa). Ser-853 carries the post-translational modification Phosphoserine. The residue at position 871 (Thr-871) is a Phosphothreonine. 3 disordered regions span residues 882–906, 959–1035, and 1055–1082; these read GAGNANSNGKSVSWSEPGGRQAPKG, EEDN…QPKS, and HAVLAGPGTPGNGLRSLYPPPPPPQHLQ. Positions 885 to 895 are enriched in polar residues; sequence NANSNGKSVSW. A phosphoserine mark is found at Ser-894 and Ser-969. Residues 1012–1032 are compositionally biased toward pro residues; the sequence is GLPPPLPQQQQQPPPQPPPQQ. The residue at position 1097 (Ser-1097) is a Phosphoserine. The disordered stretch occupies residues 1118–1177; it reads VYEREGNTEEDDLEEEEDLPAASKLTPEDSPALTPPSPFRDSVASGSSVPSSPVSESVLC. Residues 1125 to 1136 are compositionally biased toward acidic residues; that stretch reads TEEDDLEEEEDL. Ser-1147 is modified (phosphoserine). The residue at position 1151 (Thr-1151) is a Phosphothreonine. Ser-1154 is modified (phosphoserine). Residues 1159-1175 are compositionally biased toward low complexity; it reads SVASGSSVPSSPVSESV.

The protein belongs to the G-protein coupled receptor 3 family. In terms of assembly, homodimer; disulfide-linked. The PPXXF motif binds HOMER1, HOMER2 and HOMER3. Interacts with TAMALIN. Interacts with RYR1, RYR2, ITPR1, SHANK1 and SHANK3. Interacts with SHIA1. As to expression, expressed in the striatum (at protein level). Expressed in type II unipolar brush cells of the cerebellum (at protein level).

The protein resides in the cell membrane. It localises to the postsynaptic cell membrane. The protein localises to the cell projection. It is found in the dendrite. G-protein coupled receptor for glutamate. Ligand binding causes a conformation change that triggers signaling via guanine nucleotide-binding proteins (G proteins) and modulates the activity of down-stream effectors. Signaling activates a phosphatidylinositol-calcium second messenger system. May participate in the central action of glutamate in the CNS, such as long-term potentiation in the hippocampus and long-term depression in the cerebellum (By. similarity). May function in the light response in the retina. Induces GRID1 and GRID2 cation-channel activation via GNAQ-PLC-PKC pathway in dopaminergic neurons and cerebellar Purkinje cell, respectively. This is Metabotropic glutamate receptor 1 (Grm1) from Mus musculus (Mouse).